The chain runs to 511 residues: Caspase-8 (511 aa).

Residues 1–242 (MSGHNILTQL…MDGNGIANES (242 aa)) constitute a propeptide that is removed on maturation. Residues His352 and Cys393 contribute to the active site. Residues 406-415 (KINASTKSPC) constitute a propeptide that is removed on maturation.

This sequence belongs to the peptidase C14A family. In terms of assembly, heterotetramer that consists of two anti-parallel arranged heterodimers, each one formed by a 15 kDa (caspase-8 subunit p15) and a 10 kDa (caspase-8 subunit p10) subunit. Interacts with the N-terminus of Fadd.

It is found in the cytoplasm. It carries out the reaction Strict requirement for Asp at position P1 and has a preferred cleavage sequence of (Leu/Asp/Val)-Glu-Thr-Asp-|-(Gly/Ser/Ala).. In terms of biological role, effector of the programmed cell death (PCD) activators rpr, grim and W. May play an apoptotic role in the germline as well as soma. Role in immune response, required to resist Gram-negative bacterial infections by regulating DptA. Fadd interacts with Dredd, Fadd promotes cleavage of Dredd and is necessary and sufficient for enhancing Dredd-induced apoptosis. The chain is Caspase-8 from Drosophila pseudoobscura pseudoobscura (Fruit fly).